Consider the following 741-residue polypeptide: NAD(P)H-quinone oxidoreductase subunit 5, chloroplastic (741 aa).

16 helical membrane passes run 9-29 (WIIP…LLLF), 40-60 (WAFQ…NLSI), 89-109 (IDPL…MVLI), 125-145 (FAYM…SNLI), 147-167 (IYIF…FWFT), 185-205 (GDFG…SFEF), 219-239 (NEVN…GAIA), 258-278 (TPIS…FLVA), 284-304 (FIVI…TVFF), 327-347 (LGYM…FHLI), 354-374 (ALLF…VGYC), 396-416 (NSFL…CFWS), 425-445 (WLYS…TAFY), 549-569 (LFPI…GIPF), 605-625 (VFSV…YKPV), and 721-741 (YLFF…FLNF).

The protein belongs to the complex I subunit 5 family. As to quaternary structure, NDH is composed of at least 16 different subunits, 5 of which are encoded in the nucleus.

It localises to the plastid. Its subcellular location is the chloroplast thylakoid membrane. The catalysed reaction is a plastoquinone + NADH + (n+1) H(+)(in) = a plastoquinol + NAD(+) + n H(+)(out). It catalyses the reaction a plastoquinone + NADPH + (n+1) H(+)(in) = a plastoquinol + NADP(+) + n H(+)(out). Its function is as follows. NDH shuttles electrons from NAD(P)H:plastoquinone, via FMN and iron-sulfur (Fe-S) centers, to quinones in the photosynthetic chain and possibly in a chloroplast respiratory chain. The immediate electron acceptor for the enzyme in this species is believed to be plastoquinone. Couples the redox reaction to proton translocation, and thus conserves the redox energy in a proton gradient. The sequence is that of NAD(P)H-quinone oxidoreductase subunit 5, chloroplastic (ndhF) from Flaveria ramosissima (Yellowtops).